The sequence spans 363 residues: Flagellar P-ring protein (363 aa).

An N-terminal signal peptide occupies residues 1–20 (MKYKLVLAVAVLVFSLPSQA).

This sequence belongs to the FlgI family. As to quaternary structure, the basal body constitutes a major portion of the flagellar organelle and consists of four rings (L,P,S, and M) mounted on a central rod.

Its subcellular location is the periplasm. It localises to the bacterial flagellum basal body. Assembles around the rod to form the L-ring and probably protects the motor/basal body from shearing forces during rotation. This chain is Flagellar P-ring protein, found in Shewanella baltica (strain OS223).